The primary structure comprises 232 residues: Small heat shock protein, chloroplastic (232 aa).

Residues 1-25 show a composition bias toward polar residues; that stretch reads MAQSVSLSTIASPILSQKPGSSVKS. Disordered regions lie at residues 1 to 35 and 48 to 81; these read MAQS…SFPL and RAQA…RKPR. Residues 1–46 constitute a chloroplast transit peptide; it reads MAQSVSLSTIASPILSQKPGSSVKSTPPCMASFPLRRQLPRLGLRN. The segment covering 55–78 has biased composition (basic and acidic residues); that stretch reads GDNKDNSVEVHRVNKDDQGTAVER. In terms of domain architecture, sHSP spans 124–232; it reads IGGGEIRVPW…ERTVIDVQIQ (109 aa).

The protein belongs to the small heat shock protein (HSP20) family.

The protein localises to the plastid. Its subcellular location is the chloroplast. This chain is Small heat shock protein, chloroplastic (HSP21), found in Pisum sativum (Garden pea).